Reading from the N-terminus, the 447-residue chain is Glucose-6-phosphate isomerase (447 aa).

E289 serves as the catalytic Proton donor. Catalysis depends on residues H310 and K424.

Belongs to the GPI family.

It localises to the cytoplasm. It catalyses the reaction alpha-D-glucose 6-phosphate = beta-D-fructose 6-phosphate. Its pathway is carbohydrate biosynthesis; gluconeogenesis. It participates in carbohydrate degradation; glycolysis; D-glyceraldehyde 3-phosphate and glycerone phosphate from D-glucose: step 2/4. Functionally, catalyzes the reversible isomerization of glucose-6-phosphate to fructose-6-phosphate. The protein is Glucose-6-phosphate isomerase of Parabacteroides distasonis (strain ATCC 8503 / DSM 20701 / CIP 104284 / JCM 5825 / NCTC 11152).